The chain runs to 322 residues: Methionyl-tRNA formyltransferase (322 aa).

112–115 (SLLP) provides a ligand contact to (6S)-5,6,7,8-tetrahydrofolate.

It belongs to the Fmt family.

The enzyme catalyses L-methionyl-tRNA(fMet) + (6R)-10-formyltetrahydrofolate = N-formyl-L-methionyl-tRNA(fMet) + (6S)-5,6,7,8-tetrahydrofolate + H(+). Attaches a formyl group to the free amino group of methionyl-tRNA(fMet). The formyl group appears to play a dual role in the initiator identity of N-formylmethionyl-tRNA by promoting its recognition by IF2 and preventing the misappropriation of this tRNA by the elongation apparatus. The polypeptide is Methionyl-tRNA formyltransferase (Synechococcus sp. (strain JA-2-3B'a(2-13)) (Cyanobacteria bacterium Yellowstone B-Prime)).